The chain runs to 490 residues: Adenylosuccinate synthetase 1, chloroplastic (490 aa).

The transit peptide at 1–47 (MSLSTLSHPAAAAAAATGSGKSHFRTAPAAQSVRFPKARPPVPAAVS) directs the protein to the chloroplast. The interval 14-36 (AAATGSGKSHFRTAPAAQSVRFP) is disordered. Residues 77 to 83 (GDEGKGK) and 105 to 107 (GHT) each bind GTP. D78 functions as the Proton acceptor in the catalytic mechanism. Mg(2+) is bound by residues D78 and G105. Residues 78 to 81 (DEGK), 103 to 106 (NAGH), T195, R209, Q289, T304, and R368 each bind IMP. Catalysis depends on H106, which acts as the Proton donor. A substrate-binding site is contributed by 364-370 (TTTGRPR). GTP contacts are provided by residues R370, 396-398 (KLD), and 479-481 (GVG).

The protein belongs to the adenylosuccinate synthetase family. Homodimer. Mg(2+) is required as a cofactor.

It is found in the plastid. The protein resides in the chloroplast. It catalyses the reaction IMP + L-aspartate + GTP = N(6)-(1,2-dicarboxyethyl)-AMP + GDP + phosphate + 2 H(+). The protein operates within purine metabolism; AMP biosynthesis via de novo pathway; AMP from IMP: step 1/2. Plays an important role in the de novo pathway and in the salvage pathway of purine nucleotide biosynthesis. Catalyzes the first committed step in the biosynthesis of AMP from IMP. The chain is Adenylosuccinate synthetase 1, chloroplastic from Sorghum bicolor (Sorghum).